Consider the following 512-residue polypeptide: Gamma-aminobutyric acid receptor subunit beta-2 (512 aa).

Positions 1–25 (MWRVRKRGYFGIWSFPLIIAAVCAQ) are cleaved as a signal peptide. Topologically, residues 26 to 244 (SVNDPSNMSL…SFKLKRNIGY (219 aa)) are extracellular. Asn32 and Asn104 each carry an N-linked (GlcNAc...) asparagine glycan. Tyr121 lines the histamine pocket. A disulfide bond links Cys160 and Cys174. Residue Asn173 is glycosylated (N-linked (GlcNAc...) asparagine). Histamine-binding positions include 180-181 (SY) and Thr226. 4-aminobutanoate is bound by residues Tyr181 and Thr226. Helical transmembrane passes span 245–266 (FILQ…SFWI), 270–292 (ASAA…NTHL), and 304–326 (AIDM…YALV). The Cytoplasmic portion of the chain corresponds to 327-489 (NYIFFGRGPQ…DLTDVNAIDR (163 aa)). Tyr441 bears the Phosphotyrosine mark. The helical transmembrane segment at 490–511 (WSRIFFPVVFSFFNIVYWLYYV) threads the bilayer.

Belongs to the ligand-gated ion channel (TC 1.A.9) family. Gamma-aminobutyric acid receptor (TC 1.A.9.5) subfamily. GABRB2 sub-subfamily. As to quaternary structure, heteropentamer, formed by a combination of alpha (GABRA1-6), beta (GABRB1-3), gamma (GABRG1-3), delta (GABRD), epsilon (GABRE), rho (GABRR1-3), pi (GABRP) and theta (GABRQ) chains, each subunit exhibiting distinct physiological and pharmacological properties. Interacts with UBQLN1. May interact with KIF21B. Identified in a complex of 720 kDa composed of LHFPL4, NLGN2, GABRA1, GABRB2, GABRG2 and GABRB3. Post-translationally, glycosylated.

Its subcellular location is the postsynaptic cell membrane. It localises to the cell membrane. The protein localises to the cytoplasmic vesicle. It carries out the reaction chloride(in) = chloride(out). Allosterically activated by benzodiazepines and the anesthetic etomidate. Inhibited by the antagonist bicuculline. Potentiated by histamine. Functionally, beta subunit of the heteropentameric ligand-gated chloride channel gated by gamma-aminobutyric acid (GABA), a major inhibitory neurotransmitter in the brain. GABA-gated chloride channels, also named GABA(A) receptors (GABAAR), consist of five subunits arranged around a central pore and contain GABA active binding site(s) located at the alpha and beta subunit interface(s). When activated by GABA, GABAARs selectively allow the flow of chloride anions across the cell membrane down their electrochemical gradient. Chloride influx into the postsynaptic neuron following GABAAR opening decreases the neuron ability to generate a new action potential, thereby reducing nerve transmission. GABAARs containing alpha-1 and beta-2 or -3 subunits exhibit synaptogenic activity; the gamma-2 subunit being necessary but not sufficient to induce rapid synaptic contacts formation. Extrasynaptic beta-2 receptors contribute to the tonic GABAergic inhibition. Beta-containing GABAARs can simultaneously bind GABA and histamine where histamine binds at the interface of two neighboring beta subunits, which may be involved in the regulation of sleep and wakefulness. This is Gamma-aminobutyric acid receptor subunit beta-2 from Mus musculus (Mouse).